We begin with the raw amino-acid sequence, 318 residues long: Olfactory receptor 10H1 (318 aa).

Over 1 to 25 (MQRANHSTVTQFILVGFSVFPHLQL) the chain is Extracellular. Residue asparagine 5 is glycosylated (N-linked (GlcNAc...) asparagine). The chain crosses the membrane as a helical span at residues 26-46 (MLFLLFLLMYLFTLLGNLLIM). Topologically, residues 47 to 54 (ATVWSERS) are cytoplasmic. Residues 55–75 (LHTPMYLFLCALSVSEILYTV) traverse the membrane as a helical segment. Residues 76–99 (AIIPRMLADLLSTQRSIAFLACAS) lie on the Extracellular side of the membrane. Residues cysteine 97 and cysteine 189 are joined by a disulfide bond. The chain crosses the membrane as a helical span at residues 100 to 120 (QMFFSFSFGFTHSFLLTVMGY). Topologically, residues 121 to 139 (DRYVAICHPLRYNVLMSPR) are cytoplasmic. The chain crosses the membrane as a helical span at residues 140 to 160 (GCACLVGCSWAGGLVMGMVVT). Topologically, residues 161–197 (SAIFHLAFCGHKEIHHFACHVPPLLKLACGDDVLVVA) are extracellular. Residues 198–218 (KGVGLVCITALLGCFLLILLS) traverse the membrane as a helical segment. Residues 219–238 (YAFIVAAILKIPSAEGRNKA) lie on the Cytoplasmic side of the membrane. Residues 239-259 (FSTCASHLTVVVVHYGFASVI) form a helical membrane-spanning segment. Over 260-272 (YLKPKSPQSLEGD) the chain is Extracellular. A helical membrane pass occupies residues 273 to 293 (TLMGITYTVLTPFLSPIIFSL). The Cytoplasmic portion of the chain corresponds to 294 to 318 (RNKELKVAMKKTFFSKLYPEKNVMM).

Belongs to the G-protein coupled receptor 1 family.

The protein localises to the cell membrane. Functionally, odorant receptor. The sequence is that of Olfactory receptor 10H1 (OR10H1) from Homo sapiens (Human).